A 189-amino-acid chain; its full sequence is Movement protein (189 aa).

It belongs to the tombusvirus/aureusvirus movement protein p22 family. In terms of assembly, interacts with host protein HFI22. In terms of processing, phosphorylated.

The protein localises to the host membrane. Its function is as follows. Transports viral genome to neighboring plant cells directly through plasmosdesmata, without any budding. The movement protein allows efficient cell to cell propagation, by bypassing the host cell wall barrier. The chain is Movement protein from Capsicum annuum (Capsicum pepper).